The primary structure comprises 519 residues: Chloroethene reductive dehalogenase (519 aa).

The tat-type signal signal peptide spans 1 to 43 (MSKFHKTISRRDFMKGLGLAGAGIGAVAASAPVFHDIDELVSS). 4Fe-4S ferredoxin-type domains lie at 388–420 (PTPP…QEDE) and 435–465 (LGYR…LENA). [4Fe-4S] cluster contacts are provided by Cys400, Cys403, Cys406, Cys410, Cys444, Cys448, Cys451, and Cys455.

Belongs to the PceA family. It depends on [4Fe-4S] cluster as a cofactor. Requires corrinoid as cofactor. Post-translationally, predicted to be exported by the Tat system. The position of the signal peptide cleavage has been experimentally proven.

Its subcellular location is the cell membrane. The enzyme catalyses chloroethene + AH2 = ethene + chloride + A + H(+). It carries out the reaction (Z)-1,2-dichloroethene + AH2 = chloroethene + chloride + A + H(+). The catalysed reaction is 1,1-dichloroethene + AH2 = chloroethene + chloride + A + H(+). Its function is as follows. Catalyzes the reductive dechlorination of chloroethene (or vinyl chloride, VC) to ethene. Can also reduce all dichloroethene (DCE) isomers, but not tetrachloroethene (PCE) or trichloroethene (TCE), at high rates. Reduced methyl viologen can act as the artificial electron donor. The sequence is that of Chloroethene reductive dehalogenase from Dehalococcoides mccartyi (strain VS).